Here is a 756-residue protein sequence, read N- to C-terminus: Cellulose synthase catalytic subunit [UDP-forming] (756 aa).

Transmembrane regions (helical) follow at residues 27 to 47 (ASYIVGALGLCALIAATTVTL), 49 to 69 (NNEQLIVAAVCVVIFFVVGRG), 106 to 126 (GILGVILLMAELYALYMLFLS), and 167 to 187 (LTVLGALGIDWPPDKVNVYIL). A catalytic subdomain A region spans residues 147-242 (DWPTVDIFIP…YILILDCDHI (96 aa)). Residue D189 is part of the active site. Substrate contacts are provided by D238 and D240. The segment at 319 to 379 (EAIESIGGFA…GQRMRWARGM (61 aa)) is catalytic subdomain B. The active site involves D335. The next 5 membrane-spanning stretches (helical) occupy residues 409–429 (FFFAIPRVIFLASPLAFLFAG), 432–452 (IIAAAPLAVAAYALPHMFHSI), 470–490 (VYETTMALFLVRVTIVTLLFP), 517–537 (NIIFATIMMGGLLIGLFELIV), and 551–571 (LLNCAWALISLIILFAAIAVG). The 106-residue stretch at 576–681 (QVRYNHRVEA…ERDIVRFVFG (106 aa)) folds into the PilZ domain. The interval 721 to 756 (NSRPKKKPLALPVERREPTTIHSGQTQEGKISRAAS) is disordered. A compositionally biased stretch (polar residues) spans 740–756 (TIHSGQTQEGKISRAAS).

This sequence belongs to the glycosyltransferase 2 family. Mg(2+) serves as cofactor.

It is found in the cell inner membrane. The enzyme catalyses [(1-&gt;4)-beta-D-glucosyl](n) + UDP-alpha-D-glucose = [(1-&gt;4)-beta-D-glucosyl](n+1) + UDP + H(+). It participates in glycan metabolism; bacterial cellulose biosynthesis. Activated by bis-(3'-5') cyclic diguanylic acid (c-di-GMP). Catalytic subunit of cellulose synthase. It polymerizes uridine 5'-diphosphate glucose to cellulose. The thick cellulosic mats generated by this enzyme probably provide a specialized protective environment to the bacterium. The polypeptide is Cellulose synthase catalytic subunit [UDP-forming] (bcsA) (Komagataeibacter sucrofermentans (strain ATCC 700178 / DSM 15973 / CECT 7291 / JCM 9730 / LMG 18788 / BPR 2001) (Acetobacter xylinus subsp. sucrofermentans)).